Consider the following 252-residue polypeptide: 5-oxoprolinase subunit A (252 aa).

The protein belongs to the LamB/PxpA family. As to quaternary structure, forms a complex composed of PxpA, PxpB and PxpC.

The enzyme catalyses 5-oxo-L-proline + ATP + 2 H2O = L-glutamate + ADP + phosphate + H(+). In terms of biological role, catalyzes the cleavage of 5-oxoproline to form L-glutamate coupled to the hydrolysis of ATP to ADP and inorganic phosphate. In Mycobacterium ulcerans (strain Agy99), this protein is 5-oxoprolinase subunit A.